The sequence spans 515 residues: ATP-dependent RNA helicase DBP3 (515 aa).

The disordered stretch occupies residues Met1 to Glu67. A Q motif motif is present at residues Thr100–Ala127. One can recognise a Helicase ATP-binding domain in the interval Trp130 to Val306. Ala143–Thr150 contributes to the ATP binding site. The short motif at Asp252 to Asp255 is the DEAD box element. Positions Arg335–Gly484 constitute a Helicase C-terminal domain.

The protein belongs to the DEAD box helicase family. DDX5/DBP2 subfamily.

It localises to the nucleus. The protein localises to the nucleolus. It carries out the reaction ATP + H2O = ADP + phosphate + H(+). Functionally, ATP-dependent RNA helicase required for 60S ribosomal subunit synthesis. Involved in efficient pre-rRNA processing, predominantly at site A3, which is necessary for the normal formation of 25S and 5.8S rRNAs. This Coccidioides immitis (strain RS) (Valley fever fungus) protein is ATP-dependent RNA helicase DBP3 (DBP3).